A 310-amino-acid polypeptide reads, in one-letter code: Thioredoxin reductase (310 aa).

35 to 42 contributes to the FAD binding site; it reads ERGMPGGQ. A disulfide bond links C134 and C137. FAD is bound at residue 277–286; it reads DVRDKGLRQI.

This sequence belongs to the class-II pyridine nucleotide-disulfide oxidoreductase family. As to quaternary structure, homodimer. It depends on FAD as a cofactor.

It localises to the cytoplasm. It carries out the reaction [thioredoxin]-dithiol + NADP(+) = [thioredoxin]-disulfide + NADPH + H(+). This chain is Thioredoxin reductase (trxB), found in Staphylococcus epidermidis (strain ATCC 35984 / DSM 28319 / BCRC 17069 / CCUG 31568 / BM 3577 / RP62A).